The following is a 587-amino-acid chain: Pyruvate kinase (587 aa).

R33 is a binding site for substrate. K(+) contacts are provided by N35, S37, D67, and T68. 35–38 (NFSH) provides a ligand contact to ATP. ATP is bound by residues R74 and K157. K221 contacts substrate. E223 contacts Mg(2+). 3 residues coordinate substrate: G246, D247, and T279. Residue D247 participates in Mg(2+) binding.

Belongs to the pyruvate kinase family. The protein in the C-terminal section; belongs to the PEP-utilizing enzyme family. As to quaternary structure, homotetramer. Mg(2+) serves as cofactor. The cofactor is K(+). In terms of processing, the N-terminus is blocked.

The enzyme catalyses pyruvate + ATP = phosphoenolpyruvate + ADP + H(+). Its pathway is carbohydrate degradation; glycolysis; pyruvate from D-glyceraldehyde 3-phosphate: step 5/5. Its activity is regulated as follows. Exhibits homotropic positive cooperativity for PEP. Allosterically activated by ribose-5-phosphate, AMP and other nucleoside monophosphates but not by fructose-1,6-bisphosphate. In terms of biological role, catalyzes the phosphoryl transfer from phosphoenolpyruvate (PEP) to ADP to form pyruvate and ATP. Has a broad specificity for nucleoside diphosphates and can use ADP, GDP, IDP and UDP. In Geobacillus stearothermophilus (Bacillus stearothermophilus), this protein is Pyruvate kinase (pyk).